The sequence spans 215 residues: Methylosome subunit pICln (215 aa).

2 disordered regions span residues 88 to 120 and 160 to 215; these read GDPPQQAVNGRNGGGSEAEVDEGNGSDEHDEDD and HPDS…DADE. Composition is skewed to acidic residues over residues 105 to 120, 167 to 190, and 203 to 215; these read AEVDEGNGSDEHDEDD, DSEDSDPMQDAGGLEDEAMEEDDA, and LDDDEERFEDADE.

This sequence belongs to the pICln (TC 1.A.47) family. Component of the methylosome, a 20S complex containing at least CLNS1A/pICln, PRMT5/SKB1 and WDR77/MEP50; may mediate SNRPD1 and SNRPD3 methylation. Forms a 6S pICln-Sm complex composed of CLNS1A/pICln, SNRPD1, SNRPD2, SNRPE, SNRPF and SNRPG; ring-like structure where CLNS1A/pICln mimics additional Sm proteins and which is unable to assemble into the core snRNP.

It localises to the cytoplasm. The protein resides in the cytosol. Its subcellular location is the nucleus. The protein localises to the cytoskeleton. In terms of biological role, involved in both the assembly of spliceosomal snRNPs and the methylation of Sm proteins. Chaperone that regulates the assembly of spliceosomal U1, U2, U4 and U5 small nuclear ribonucleoproteins (snRNPs), the building blocks of the spliceosome, and thereby plays an important role in the splicing of cellular pre-mRNAs. Most spliceosomal snRNPs contain a common set of Sm proteins SNRPB, SNRPD1, SNRPD2, SNRPD3, SNRPE, SNRPF and SNRPG that assemble in a heptameric protein ring on the Sm site of the small nuclear RNA to form the core snRNP (Sm core). In the cytosol, the Sm proteins SNRPD1, SNRPD2, SNRPE, SNRPF and SNRPG are trapped in an inactive 6S pICln-Sm complex by the chaperone CLNS1A that controls the assembly of the core snRNP. Dissociation by the SMN complex of CLNS1A from the trapped Sm proteins and their transfer to an SMN-Sm complex triggers the assembly of core snRNPs and their transport to the nucleus. The protein is Methylosome subunit pICln (icln) of Drosophila melanogaster (Fruit fly).